We begin with the raw amino-acid sequence, 446 residues long: Tetratricopeptide repeat protein 23 (446 aa).

TPR repeat units lie at residues 45-78, 137-170, 186-219, 310-347, and 356-389; these read LRLS…TRIC, VELF…SKEM, ARIK…TEIS, TAKF…KVAV, and AETY…QTLL. Residues 410-446 form a disordered region; sequence APEVPARPRPSPGAKAAFCAGGRPYSVPGRTRPSAAD.

Associated with the EvC complex composed of EFCAB7, IQCE, EVC2 and EVC.

Its subcellular location is the cell projection. The protein resides in the cilium. Functionally, participates positively in the ciliary Hedgehog (Hh) signaling. The protein is Tetratricopeptide repeat protein 23 (TTC23) of Bos taurus (Bovine).